The chain runs to 442 residues: Histidinol dehydrogenase (442 aa).

The NAD(+) site is built by Y132, Q194, and N217. Residues S243, Q265, and H268 each contribute to the substrate site. Zn(2+)-binding residues include Q265 and H268. Residues E332 and H333 each act as proton acceptor in the active site. Residues H333, D366, E420, and H425 each contribute to the substrate site. Position 366 (D366) interacts with Zn(2+). H425 lines the Zn(2+) pocket.

It belongs to the histidinol dehydrogenase family. Zn(2+) is required as a cofactor.

The catalysed reaction is L-histidinol + 2 NAD(+) + H2O = L-histidine + 2 NADH + 3 H(+). Its pathway is amino-acid biosynthesis; L-histidine biosynthesis; L-histidine from 5-phospho-alpha-D-ribose 1-diphosphate: step 9/9. Functionally, catalyzes the sequential NAD-dependent oxidations of L-histidinol to L-histidinaldehyde and then to L-histidine. The sequence is that of Histidinol dehydrogenase from Idiomarina loihiensis (strain ATCC BAA-735 / DSM 15497 / L2-TR).